The chain runs to 107 residues: Phosphoribosyl-ATP pyrophosphatase (107 aa).

Belongs to the PRA-PH family.

Its subcellular location is the cytoplasm. The catalysed reaction is 1-(5-phospho-beta-D-ribosyl)-ATP + H2O = 1-(5-phospho-beta-D-ribosyl)-5'-AMP + diphosphate + H(+). The protein operates within amino-acid biosynthesis; L-histidine biosynthesis; L-histidine from 5-phospho-alpha-D-ribose 1-diphosphate: step 2/9. This Sinorhizobium fredii (strain NBRC 101917 / NGR234) protein is Phosphoribosyl-ATP pyrophosphatase.